Consider the following 33-residue polypeptide: Photosystem II reaction center protein Psb30 (33 aa).

The chain crosses the membrane as a helical span at residues 5–25; it reads IVFQLTALLFVVAAGPLVIVL.

It belongs to the Psb30/Ycf12 family. PSII is composed of 1 copy each of membrane proteins PsbA, PsbB, PsbC, PsbD, PsbE, PsbF, PsbH, PsbI, PsbJ, PsbK, PsbL, PsbM, PsbT, PsbX, PsbY, PsbZ, Psb30/Ycf12, peripheral proteins of the oxygen-evolving complex and a large number of cofactors. It forms dimeric complexes.

Its subcellular location is the plastid. It is found in the chloroplast thylakoid membrane. In terms of biological role, a core subunit of photosystem II (PSII), probably helps stabilize the reaction center. This is Photosystem II reaction center protein Psb30 from Chlorella vulgaris (Green alga).